The sequence spans 515 residues: Probable NADPH:adrenodoxin oxidoreductase, mitochondrial (515 aa).

The FAD site is built by Ala52, Glu73, Leu81, and Ile119. Residues 191–194 (QGNV), 236–237 (RR), and Glu248 each bind NADP(+). Residues Trp419 and 426 to 428 (GSI) each bind FAD. Gly426 serves as a coordination point for NADP(+).

It belongs to the ferredoxin--NADP reductase type 1 family. Requires FAD as cofactor.

It is found in the mitochondrion inner membrane. It catalyses the reaction 2 reduced [adrenodoxin] + NADP(+) + H(+) = 2 oxidized [adrenodoxin] + NADPH. In Dictyostelium discoideum (Social amoeba), this protein is Probable NADPH:adrenodoxin oxidoreductase, mitochondrial (fdxr).